The primary structure comprises 357 residues: uncharacterized protein (357 aa).

Helical transmembrane passes span 21-41 (FIKI…LFSW), 86-106 (FFCL…CTLF), and 135-155 (GGFV…PVIF). 2 disordered regions span residues 184-229 (DKNK…AMSD) and 283-357 (KAGS…NKRN). A compositionally biased stretch (low complexity) spans 195–223 (TTNTTNFSGNGSSSSTTNATSSSSSQANN). 2 stretches are compositionally biased toward basic and acidic residues: residues 305–314 (KIEEYDNQKQ) and 322–337 (KETN…EKET). A coiled-coil region spans residues 305–337 (KIEEYDNQKQEEEENEEKETNKQQTQKDDEKET). Residues 346 to 357 (KKSKKGKKNKRN) show a composition bias toward basic residues.

The protein localises to the membrane. This is an uncharacterized protein from Dictyostelium discoideum (Social amoeba).